A 488-amino-acid chain; its full sequence is Signal recognition particle receptor FtsY (488 aa).

The disordered stretch occupies residues 14–82 (DTAPEDVSKP…AVPDDAVHGG (69 aa)). Low complexity predominate over residues 32–67 (VGTSSTGSPVGTGAAMPAAQDAPSPAAPHAIATPDD). Residues 287–294 (GVNGVGKT), 369–373 (DTAGR), and 433–436 (TKLD) contribute to the GTP site.

The protein belongs to the GTP-binding SRP family. FtsY subfamily. In terms of assembly, part of the signal recognition particle protein translocation system, which is composed of SRP and FtsY. SRP is a ribonucleoprotein composed of Ffh and a 4.5S RNA molecule.

It is found in the cell inner membrane. It localises to the cytoplasm. The catalysed reaction is GTP + H2O = GDP + phosphate + H(+). Involved in targeting and insertion of nascent membrane proteins into the cytoplasmic membrane. Acts as a receptor for the complex formed by the signal recognition particle (SRP) and the ribosome-nascent chain (RNC). Interaction with SRP-RNC leads to the transfer of the RNC complex to the Sec translocase for insertion into the membrane, the hydrolysis of GTP by both Ffh and FtsY, and the dissociation of the SRP-FtsY complex into the individual components. In Nitratidesulfovibrio vulgaris (strain ATCC 29579 / DSM 644 / CCUG 34227 / NCIMB 8303 / VKM B-1760 / Hildenborough) (Desulfovibrio vulgaris), this protein is Signal recognition particle receptor FtsY.